We begin with the raw amino-acid sequence, 204 residues long: Somatotropin (204 aa).

The signal sequence occupies residues Met1 to Ser17. Position 18 is a pyrrolidone carboxylic acid (Gln18). Position 36 (His36) interacts with Zn(2+). Cys69 and Cys177 are disulfide-bonded. Glu186 is a Zn(2+) binding site. Cysteines 194 and 202 form a disulfide.

Belongs to the somatotropin/prolactin family.

It localises to the secreted. Functionally, growth hormone plays an important role in growth control and is involved in the regulation of several anabolic processes. Implicated as an osmoregulatory substance important for seawater adaptation. This Sparus aurata (Gilthead sea bream) protein is Somatotropin (gh).